A 640-amino-acid polypeptide reads, in one-letter code: Chaperone protein DnaK (640 aa).

Position 199 is a phosphothreonine; by autocatalysis (threonine 199). The segment at 603–640 (YTQQAEEPQPQKEEGKAAEEDVVDAEFEEVKEDKNKAS) is disordered. Basic and acidic residues predominate over residues 611–621 (QPQKEEGKAAE). The span at 622–632 (EDVVDAEFEEV) shows a compositional bias: acidic residues.

Belongs to the heat shock protein 70 family.

Functionally, acts as a chaperone. This chain is Chaperone protein DnaK, found in Nitrosococcus oceani (strain ATCC 19707 / BCRC 17464 / JCM 30415 / NCIMB 11848 / C-107).